Reading from the N-terminus, the 390-residue chain is 3-ketoacyl-CoA thiolase (390 aa).

Cys-95 serves as the catalytic Acyl-thioester intermediate. Active-site proton acceptor residues include His-346 and Cys-376.

This sequence belongs to the thiolase-like superfamily. Thiolase family. Heterotetramer of two alpha chains (FadB) and two beta chains (FadA).

The protein localises to the cytoplasm. The enzyme catalyses an acyl-CoA + acetyl-CoA = a 3-oxoacyl-CoA + CoA. It functions in the pathway lipid metabolism; fatty acid beta-oxidation. In terms of biological role, catalyzes the final step of fatty acid oxidation in which acetyl-CoA is released and the CoA ester of a fatty acid two carbons shorter is formed. The chain is 3-ketoacyl-CoA thiolase from Acinetobacter baumannii (strain ATCC 17978 / DSM 105126 / CIP 53.77 / LMG 1025 / NCDC KC755 / 5377).